The primary structure comprises 180 residues: Protein C2-DOMAIN ABA-RELATED 10 (180 aa).

A C2 domain is found at 1–105 (MDQKPLGLLT…EALKMGMELL (105 aa)). 7 residues coordinate Ca(2+): Arg22, Asp23, Asp28, Asp74, Trp75, Asp76, and Asp82.

This sequence belongs to the plant CAR protein family. Binds to PYR/PYL/RCAR abscisic acid intracellular receptors in an ABA-independent manner, both at the plasma membrane and in the nucleus.

The protein resides in the cell membrane. The protein localises to the nucleus. Functionally, stimulates the GTPase/ATPase activities of Obg-like ATPases. Mediates the transient calcium-dependent interaction of PYR/PYL/RCAR abscisic acid (ABA) receptors with the plasma membrane and thus regulates ABA sensitivity. This Arabidopsis thaliana (Mouse-ear cress) protein is Protein C2-DOMAIN ABA-RELATED 10.